The following is a 196-amino-acid chain: Serine/arginine-rich splicing factor RSZ22A (196 aa).

Residues 2–71 (SRVYVGNLDP…NGWRVEQSHN (70 aa)) form the RRM domain. At Ser-48 the chain carries Phosphoserine. The segment covering 58 to 70 (VDGKNGWRVEQSH) has biased composition (basic and acidic residues). A disordered region spans residues 58-196 (VDGKNGWRVE…GLKDVRRSRS (139 aa)). Positions 72–87 (RGGGGGRGGGRGGGDG) are enriched in gly residues. The segment covering 88 to 100 (GRGRGGSDLKCYE) has biased composition (basic and acidic residues). The CCHC-type zinc-finger motif lies at 96-113 (LKCYECGESGHFARECRS). Basic residues predominate over residues 119 to 135 (GRRRSRSRSRSPPRYRK). Ser-136, Ser-144, Ser-146, Ser-151, Ser-159, Ser-170, and Ser-196 each carry phosphoserine. Low complexity predominate over residues 139–149 (YGGRRSYSPRA).

Belongs to the splicing factor SR family. RSZ subfamily. Component of the spliceosome. Extensively phosphorylated on serine residues in the RS domain.

Its subcellular location is the nucleus. In terms of biological role, probably involved in intron recognition and spliceosome assembly. This chain is Serine/arginine-rich splicing factor RSZ22A (RSZ22A), found in Arabidopsis thaliana (Mouse-ear cress).